Consider the following 340-residue polypeptide: tRNA-cytidine(32) 2-sulfurtransferase (340 aa).

Residues 74–79 (SGGKDS) carry the PP-loop motif motif. 3 residues coordinate [4Fe-4S] cluster: Cys149, Cys152, and Cys240.

Belongs to the TtcA family. As to quaternary structure, homodimer. Mg(2+) serves as cofactor. The cofactor is [4Fe-4S] cluster.

Its subcellular location is the cytoplasm. It catalyses the reaction cytidine(32) in tRNA + S-sulfanyl-L-cysteinyl-[cysteine desulfurase] + AH2 + ATP = 2-thiocytidine(32) in tRNA + L-cysteinyl-[cysteine desulfurase] + A + AMP + diphosphate + H(+). It participates in tRNA modification. In terms of biological role, catalyzes the ATP-dependent 2-thiolation of cytidine in position 32 of tRNA, to form 2-thiocytidine (s(2)C32). The sulfur atoms are provided by the cysteine/cysteine desulfurase (IscS) system. The polypeptide is tRNA-cytidine(32) 2-sulfurtransferase (Burkholderia ambifaria (strain MC40-6)).